Reading from the N-terminus, the 392-residue chain is Serpin B11 (392 aa).

An RCL region spans residues 341 to 365; it reads EEGTEAAAATGDSIAVKSLPMRAQF.

It belongs to the serpin family. Ov-serpin subfamily. As to expression, detected in a restricted number of tissues, including lung, placenta, prostate, and tonsil.

It is found in the cytoplasm. In terms of biological role, has no serine protease inhibitory activity, probably due to variants in the scaffold impairing conformational change. The sequence is that of Serpin B11 (SERPINB11) from Homo sapiens (Human).